Here is a 507-residue protein sequence, read N- to C-terminus: Cytochrome P450 4X1 (507 aa).

Residues 14 to 34 (LHLALVFCLALVLMQAMKLYL) traverse the membrane as a helical segment. Cysteine 452 serves as a coordination point for heme.

The protein belongs to the cytochrome P450 family. Heme is required as a cofactor. In terms of tissue distribution, expressed in brain and aorta. In the brain, expressed in the Purkinje cells of the cerebellum, pyramidal neurons in the dentate gyrus of the hippocampus, cortical forebrain neurons and those of brain stem nuclei (at protein level). In addition to neurons, also expressed in cerebral vascular endothelial cells (at protein level). Also expressed in epithelial cells of the choroid plexus (at protein level). Hardly detectable in heart, lung, kidney and spleen.

It localises to the endoplasmic reticulum membrane. The protein resides in the microsome membrane. It catalyses the reaction N-(5Z,8Z,11Z,14Z-eicosatetraenoyl)-ethanolamine + reduced [NADPH--hemoprotein reductase] + O2 = N-(14,15-epoxy-5Z,8Z,11Z-eicosatrienoyl)-ethanolamine + oxidized [NADPH--hemoprotein reductase] + H2O + H(+). Its function is as follows. A cytochrome P450 monooxygenase that selectively catalyzes the epoxidation of the last double bond of the arachidonoyl moiety of anandamide, potentially modulating endocannabinoid signaling. Has no hydroxylase activity toward various fatty acids, steroids and prostaglandins. Mechanistically, uses molecular oxygen inserting one oxygen atom into a substrate, and reducing the second into a water molecule, with two electrons provided by NADPH via cytochrome P450 reductase (CPR; NADPH-ferrihemoprotein reductase). This Mus musculus (Mouse) protein is Cytochrome P450 4X1.